Here is a 268-residue protein sequence, read N- to C-terminus: Protein MGF 300-1L (268 aa).

Over 1–175 the chain is Cytoplasmic; it reads MVSLTTCCLK…QTFKIFYAKN (175 aa). A helical membrane pass occupies residues 176 to 193; the sequence is YSLSTLYCIFLAIYYKRY. At 194 to 268 the chain is on the extracellular side; sequence TALRKMVKIY…MYAFSQNNFW (75 aa).

This sequence belongs to the asfivirus MGF 300 family.

The protein resides in the host membrane. Plays a role in virus cell tropism, and may be required for efficient virus replication in macrophages. In African swine fever virus (isolate Tick/South Africa/Pretoriuskop Pr4/1996) (ASFV), this protein is Protein MGF 300-1L.